Consider the following 354-residue polypeptide: MTELKNDRYLRALLRQPVDVTPVWMMRQAGRYLPEYKATRAQAGDFMSLCKNAELACEVTLQPLRRYPLDAAILFSDILTIPDAMGLGLYFEAGEGPRFTAPVTCKADVEKLPIPDPEGELGYVMNAVRTIRRELKGEVPLIGFSGSPWTLATYMVEGGSSKAFTVIKKMMYADPQALHLLLDKLAKSVTLYLNAQIKAGAQSVMIFDTWGGVLTGRDYQQFSLYYMHKIVDGLLRENDGRCVPVTLFTKGGGQWLEAMAETGCDALGLDWTTDIADARRRVGHKVALQGNMDPSMLYAPPARIEDEVATILAGFGQGEGHVFNLGHGIHQDVPPEHAGAFVEAVHRLSAQYHN.

Substrate contacts are provided by residues 27–31 (RQAGR), Asp77, Tyr154, Thr209, and His327.

This sequence belongs to the uroporphyrinogen decarboxylase family. Homodimer.

Its subcellular location is the cytoplasm. It carries out the reaction uroporphyrinogen III + 4 H(+) = coproporphyrinogen III + 4 CO2. It participates in porphyrin-containing compound metabolism; protoporphyrin-IX biosynthesis; coproporphyrinogen-III from 5-aminolevulinate: step 4/4. Its function is as follows. Catalyzes the decarboxylation of four acetate groups of uroporphyrinogen-III to yield coproporphyrinogen-III. This Salmonella dublin (strain CT_02021853) protein is Uroporphyrinogen decarboxylase.